A 921-amino-acid chain; its full sequence is Isoleucine--tRNA ligase (921 aa).

Residues 57–67 (PYANGDIHMGH) carry the 'HIGH' region motif. Position 552 (E552) interacts with L-isoleucyl-5'-AMP. Positions 593–597 (KMSKS) match the 'KMSKS' region motif. K596 contributes to the ATP binding site. 4 residues coordinate Zn(2+): C888, C891, C908, and C911.

It belongs to the class-I aminoacyl-tRNA synthetase family. IleS type 1 subfamily. As to quaternary structure, monomer. Requires Zn(2+) as cofactor.

Its subcellular location is the cytoplasm. It carries out the reaction tRNA(Ile) + L-isoleucine + ATP = L-isoleucyl-tRNA(Ile) + AMP + diphosphate. Catalyzes the attachment of isoleucine to tRNA(Ile). As IleRS can inadvertently accommodate and process structurally similar amino acids such as valine, to avoid such errors it has two additional distinct tRNA(Ile)-dependent editing activities. One activity is designated as 'pretransfer' editing and involves the hydrolysis of activated Val-AMP. The other activity is designated 'posttransfer' editing and involves deacylation of mischarged Val-tRNA(Ile). This is Isoleucine--tRNA ligase from Bacillus cereus (strain 03BB102).